Reading from the N-terminus, the 588-residue chain is Sentrin-specific protease 2 (588 aa).

The Nuclear localization signal motif lies at 28-31; that stretch reads KRRR. The residue at position 32 (serine 32) is a Phosphoserine. The Nuclear localization signal motif lies at 47–52; that stretch reads PAKRPR. Positions 72–381 are axin-binding; sequence GFPFQLTTKP…EKEISNALGH (310 aa). Positions 157-184 are disordered; the sequence is EGYNRRPSGRRHSKSNPESSLPWKPQEQ. A Nuclear export signal motif is present at residues 316–331; it reads LEPDLSEEVSARLRLG. Phosphoserine is present on residues serine 332 and serine 343. The tract at residues 394–558 is protease; sequence LRITRGDIQT…MFTCKYADYI (165 aa). Active-site residues include histidine 477 and aspartate 494. Cysteine 547 acts as the Nucleophile in catalysis.

The protein belongs to the peptidase C48 family. As to quaternary structure, binds to SUMO2 and SUMO3. Interacts with the C-terminal domain of NUP153 via its N-terminus. Interacts with MTA1. Binds to AXIN1. In terms of processing, polyubiquitinated; which leads to proteasomal degradation. In terms of tissue distribution, ubiquitous. Highly expressed in brain, lung and testis.

The protein resides in the nucleus. The protein localises to the nuclear pore complex. It localises to the nucleus membrane. Its subcellular location is the cytoplasm. In terms of biological role, protease that catalyzes two essential functions in the SUMO pathway. The first is the hydrolysis of an alpha-linked peptide bond at the C-terminal end of the small ubiquitin-like modifier (SUMO) propeptides, SUMO1, SUMO2 and SUMO3 leading to the mature form of the proteins. The second is the deconjugation of SUMO1, SUMO2 and SUMO3 from targeted proteins, by cleaving an epsilon-linked peptide bond between the C-terminal glycine of the mature SUMO and the lysine epsilon-amino group of the target protein. May down-regulate CTNNB1 levels and thereby modulate the Wnt pathway. Deconjugates SUMO2 from MTA1. Plays a dynamic role in adipogenesis by desumoylating and promoting the stabilization of CEBPB. Acts as a regulator of the cGAS-STING pathway by catalyzing desumoylation of CGAS and STING1 during the late phase of viral infection. This Rattus norvegicus (Rat) protein is Sentrin-specific protease 2 (Senp2).